Here is a 269-residue protein sequence, read N- to C-terminus: 4-hydroxy-tetrahydrodipicolinate reductase (269 aa).

Residues 8–13 (GAAGRM) and Glu34 contribute to the NAD(+) site. Arg35 is an NADP(+) binding site. NAD(+) is bound by residues 98–100 (GTT) and 122–125 (APNY). His155 functions as the Proton donor/acceptor in the catalytic mechanism. His156 contacts (S)-2,3,4,5-tetrahydrodipicolinate. The Proton donor role is filled by Lys159. 165–166 (GT) is a binding site for (S)-2,3,4,5-tetrahydrodipicolinate.

Belongs to the DapB family.

The protein localises to the cytoplasm. It carries out the reaction (S)-2,3,4,5-tetrahydrodipicolinate + NAD(+) + H2O = (2S,4S)-4-hydroxy-2,3,4,5-tetrahydrodipicolinate + NADH + H(+). It catalyses the reaction (S)-2,3,4,5-tetrahydrodipicolinate + NADP(+) + H2O = (2S,4S)-4-hydroxy-2,3,4,5-tetrahydrodipicolinate + NADPH + H(+). It participates in amino-acid biosynthesis; L-lysine biosynthesis via DAP pathway; (S)-tetrahydrodipicolinate from L-aspartate: step 4/4. In terms of biological role, catalyzes the conversion of 4-hydroxy-tetrahydrodipicolinate (HTPA) to tetrahydrodipicolinate. The polypeptide is 4-hydroxy-tetrahydrodipicolinate reductase (Vibrio cholerae serotype O1 (strain ATCC 39541 / Classical Ogawa 395 / O395)).